A 258-amino-acid polypeptide reads, in one-letter code: Imidazole glycerol phosphate synthase subunit HisF (258 aa).

Active-site residues include aspartate 11 and aspartate 130.

It belongs to the HisA/HisF family. Heterodimer of HisH and HisF.

It localises to the cytoplasm. It catalyses the reaction 5-[(5-phospho-1-deoxy-D-ribulos-1-ylimino)methylamino]-1-(5-phospho-beta-D-ribosyl)imidazole-4-carboxamide + L-glutamine = D-erythro-1-(imidazol-4-yl)glycerol 3-phosphate + 5-amino-1-(5-phospho-beta-D-ribosyl)imidazole-4-carboxamide + L-glutamate + H(+). Its pathway is amino-acid biosynthesis; L-histidine biosynthesis; L-histidine from 5-phospho-alpha-D-ribose 1-diphosphate: step 5/9. In terms of biological role, IGPS catalyzes the conversion of PRFAR and glutamine to IGP, AICAR and glutamate. The HisF subunit catalyzes the cyclization activity that produces IGP and AICAR from PRFAR using the ammonia provided by the HisH subunit. In Baumannia cicadellinicola subsp. Homalodisca coagulata, this protein is Imidazole glycerol phosphate synthase subunit HisF.